The following is a 132-amino-acid chain: Regulator of ribonuclease activity B (132 aa).

It belongs to the RraB family. As to quaternary structure, interacts with the C-terminal region of Rne.

It localises to the cytoplasm. Globally modulates RNA abundance by binding to RNase E (Rne) and regulating its endonucleolytic activity. Can modulate Rne action in a substrate-dependent manner by altering the composition of the degradosome. The polypeptide is Regulator of ribonuclease activity B (Alteromonas mediterranea (strain DSM 17117 / CIP 110805 / LMG 28347 / Deep ecotype)).